Here is a 348-residue protein sequence, read N- to C-terminus: Rhodopsin (348 aa).

Residue Met1 is modified to N-acetylmethionine. The Extracellular segment spans residues 1-36 (MNGTEGPNFYVPFSNKTGVVRSPFEYPQYYLAEPWQ). N-linked (GlcNAc...) asparagine glycans are attached at residues Asn2 and Asn15. Residues 37–61 (FSMLAAYMFLLIVLGFPINFLTLYV) form a helical membrane-spanning segment. The Cytoplasmic portion of the chain corresponds to 62-73 (TVQHKKLRTPLN). Residues 74 to 96 (YILLNLAVADLFMVFGGFTTTLY) traverse the membrane as a helical segment. Topologically, residues 97–110 (TSLHGYFVFGPTGC) are extracellular. Cysteines 110 and 187 form a disulfide. Residues 111–133 (NVEGFFATLGGEIALWSLVVLAI) form a helical membrane-spanning segment. The 'Ionic lock' involved in activated form stabilization motif lies at 134-136 (ERY). At 134-152 (ERYVVVCKPMSNFRFGENH) the chain is on the cytoplasmic side. The chain crosses the membrane as a helical span at residues 153-173 (AIMGVAFTWVMALACAAPPLA). Residues 174-202 (GWSRYIPEGMQCSCGIDYYTLKPEVNNES) lie on the Extracellular side of the membrane. Glu201 provides a ligand contact to Zn(2+). A helical transmembrane segment spans residues 203–224 (FVIYMFVVHFTIPMIVIFFCYG). Residues 225–252 (QLVFTVKEAAAQQQESATTQKAEKEVTR) lie on the Cytoplasmic side of the membrane. The helical transmembrane segment at 253–274 (MVIIMVIAFLICWVPYASVAFY) threads the bilayer. The Extracellular portion of the chain corresponds to 275–286 (IFTHQGSNFGPI). Gln279 contacts Zn(2+). Residues 287-308 (FMTLPAFFAKSASIYNPVIYIM) form a helical membrane-spanning segment. N6-(retinylidene)lysine is present on Lys296. Residues 309–348 (MNKQFRNCMLTTICCGKNPFAEEEGATTVSKTETSQVAPA) are Cytoplasmic-facing. S-palmitoyl cysteine attachment occurs at residues Cys322 and Cys323. Residues 330-348 (EEEGATTVSKTETSQVAPA) are interaction with SAG. Phosphothreonine is present on residues Thr335 and Thr336. At Ser338 the chain carries Phosphoserine. Residues Thr340 and Thr342 each carry the phosphothreonine modification. At Ser343 the chain carries Phosphoserine.

Belongs to the G-protein coupled receptor 1 family. Opsin subfamily. Homodimer. May form a complex composed of RHO, GRK1 and RCVRN in a Ca(2+)-dependent manner; RCVRN prevents the interaction between GRK1 and RHO. Interacts with GRK1. Interacts (phosphorylated form) with SAG. Interacts with GNAT1. Interacts with GNAT3. SAG and G-proteins compete for a common binding site. Interacts with PRCD; the interaction promotes PRCD stability. Forms a complex with ASAP1 and ARF4. Forms a complex with ASAP1, RAB11A, Rabin8/RAB3IP, ARF4 and RAB11FIP3; the complex regulates Golgi-to-cilia rhodopsin/RHO transport in photoreceptors. Phosphorylated on some or all of the serine and threonine residues present in the C-terminal region. In terms of processing, contains one covalently linked retinal chromophore. Upon light absorption, the covalently bound 11-cis-retinal is converted to all-trans-retinal. After hydrolysis of the Schiff base and release of the covalently bound all-trans-retinal, active rhodopsin is regenerated by binding of a fresh molecule of 11-cis-retinal.

The protein localises to the membrane. Its subcellular location is the cell projection. It is found in the cilium. The protein resides in the photoreceptor outer segment. In terms of biological role, photoreceptor required for image-forming vision at low light intensity. Required for photoreceptor cell viability after birth. Light-induced isomerization of 11-cis to all-trans retinal triggers a conformational change that activates signaling via G-proteins. Subsequent receptor phosphorylation mediates displacement of the bound G-protein alpha subunit by the arrestin SAG and terminates signaling. The polypeptide is Rhodopsin (RHO) (Trichechus manatus (Caribbean manatee)).